A 199-amino-acid polypeptide reads, in one-letter code: ATP-dependent Clp protease proteolytic subunit (199 aa).

The Nucleophile role is filled by S97. The active site involves H122.

The protein belongs to the peptidase S14 family. In terms of assembly, fourteen ClpP subunits assemble into 2 heptameric rings which stack back to back to give a disk-like structure with a central cavity, resembling the structure of eukaryotic proteasomes.

The protein localises to the cytoplasm. It catalyses the reaction Hydrolysis of proteins to small peptides in the presence of ATP and magnesium. alpha-casein is the usual test substrate. In the absence of ATP, only oligopeptides shorter than five residues are hydrolyzed (such as succinyl-Leu-Tyr-|-NHMec, and Leu-Tyr-Leu-|-Tyr-Trp, in which cleavage of the -Tyr-|-Leu- and -Tyr-|-Trp bonds also occurs).. In terms of biological role, cleaves peptides in various proteins in a process that requires ATP hydrolysis. Has a chymotrypsin-like activity. Plays a major role in the degradation of misfolded proteins. In Geotalea daltonii (strain DSM 22248 / JCM 15807 / FRC-32) (Geobacter daltonii), this protein is ATP-dependent Clp protease proteolytic subunit.